A 228-amino-acid polypeptide reads, in one-letter code: Ribulose-phosphate 3-epimerase (228 aa).

Substrate is bound at residue Ser9. The a divalent metal cation site is built by His34, Asp36, and His70. Asp36 functions as the Proton acceptor in the catalytic mechanism. Substrate is bound by residues His70, 146 to 149 (GFPG), 179 to 181 (DGG), and 201 to 202 (GS). An a divalent metal cation-binding site is contributed by Asp179. Asp179 (proton donor) is an active-site residue.

This sequence belongs to the ribulose-phosphate 3-epimerase family. The cofactor is a divalent metal cation.

The catalysed reaction is D-ribulose 5-phosphate = D-xylulose 5-phosphate. It functions in the pathway carbohydrate degradation. Catalyzes the reversible epimerization of D-ribulose 5-phosphate to D-xylulose 5-phosphate. In Buchnera aphidicola subsp. Baizongia pistaciae (strain Bp), this protein is Ribulose-phosphate 3-epimerase.